The chain runs to 431 residues: MSLMTKLGFRALVASCLITAGSAANAQVNVLITGVGSTQFPIATANFANEANLPQQVTSIVRADLARSGKFTNIDAGSTPVPESASVDLGAWKAKGANAFVAGSVNREANGQYKVNFILYDTVKQQSLGGLSLTATDTTLRTAGHKIADYIYQKLLGVRGVFATRLSYVIKTGNRYQLQISDSDGQNARIALSSTEPIISPSWSPSGTKVAYVSFERKKPIVYIHDLPTGRRYIVSDQKGNNSAPAWSPDSNTLAVALSLTGNTQIYTVNSTGGGLRRLTQSSSIDTEPFYSPDGHWIYFTSDRGGAPQIYRMPAQGESAGAAQRVTFTGSYNTSPRISPDGKLLAYISRTGGGFKLYVQDLQSGAANAITNTNRDESPSFAANGQYLLYATQSGGRNVLAAVPSDGSAPPQILSVQGGSVREPSWGPFMQ.

A signal peptide spans 1–26 (MSLMTKLGFRALVASCLITAGSAANA). The segment at 411-431 (PQILSVQGGSVREPSWGPFMQ) is disordered.

The protein belongs to the TolB family. The Tol-Pal system is composed of five core proteins: the inner membrane proteins TolA, TolQ and TolR, the periplasmic protein TolB and the outer membrane protein Pal. They form a network linking the inner and outer membranes and the peptidoglycan layer.

It localises to the periplasm. Functionally, part of the Tol-Pal system, which plays a role in outer membrane invagination during cell division and is important for maintaining outer membrane integrity. In Burkholderia lata (strain ATCC 17760 / DSM 23089 / LMG 22485 / NCIMB 9086 / R18194 / 383), this protein is Tol-Pal system protein TolB.